The chain runs to 214 residues: Protein transport protein SEC22 (214 aa).

Residues 1–192 (MIKSTLIYRE…QKINFDLLIS (192 aa)) are Cytoplasmic-facing. One can recognise a Longin domain in the interval 6–117 (LIYREDGLPL…YQFVNFDNFL (112 aa)). The v-SNARE coiled-coil homology domain occupies 132–192 (NLDQLNQELV…QKINFDLLIS (61 aa)). Residue S160 is modified to Phosphoserine. A helical; Anchor for type IV membrane protein transmembrane segment spans residues 193–213 (QYAPIVIVAFFFVFLFWWIFL). Position 214 (K214) is a topological domain, vesicular.

It belongs to the synaptobrevin family. As to quaternary structure, component of two distinct SNARE complexes consisting of SED5, BOS1, BET1 and SEC22 or UFE1, USE1, SEC20 and SEC22. YKT6 can probably replace SEC22 as subunit of either complex. Interacts with SEC24, YIF1 and YIP1.

Its subcellular location is the membrane. It is found in the endoplasmic reticulum membrane. The protein resides in the golgi apparatus membrane. Nonessential SNARE involved in targeting and fusion of ER-derived transport vesicles with the Golgi complex as well as Golgi-derived retrograde transport vesicles with the ER. This Saccharomyces cerevisiae (strain ATCC 204508 / S288c) (Baker's yeast) protein is Protein transport protein SEC22 (SEC22).